Reading from the N-terminus, the 261-residue chain is Ribosomal RNA large subunit methyltransferase E (261 aa).

Residues G81, W83, D104, D120, and D144 each contribute to the S-adenosyl-L-methionine site. Residue K184 is the Proton acceptor of the active site. The disordered stretch occupies residues 233–261 (GNALGHEVEDDGPMPHDPREDATADEDQD). Residues 245 to 254 (PMPHDPREDA) are compositionally biased toward basic and acidic residues.

This sequence belongs to the class I-like SAM-binding methyltransferase superfamily. RNA methyltransferase RlmE family.

The protein resides in the cytoplasm. The catalysed reaction is uridine(2552) in 23S rRNA + S-adenosyl-L-methionine = 2'-O-methyluridine(2552) in 23S rRNA + S-adenosyl-L-homocysteine + H(+). In terms of biological role, specifically methylates the uridine in position 2552 of 23S rRNA at the 2'-O position of the ribose in the fully assembled 50S ribosomal subunit. In Allorhizobium ampelinum (strain ATCC BAA-846 / DSM 112012 / S4) (Agrobacterium vitis (strain S4)), this protein is Ribosomal RNA large subunit methyltransferase E.